The primary structure comprises 41 residues: Large ribosomal subunit protein bL36 (41 aa).

The protein belongs to the bacterial ribosomal protein bL36 family.

The chain is Large ribosomal subunit protein bL36 from Sinorhizobium medicae (strain WSM419) (Ensifer medicae).